The chain runs to 261 residues: Cytochrome c oxidase subunit 3 (261 aa).

The Mitochondrial matrix segment spans residues Met-1 to Pro-15. Residues Trp-16 to Trp-34 form a helical membrane-spanning segment. Topologically, residues Phe-35–Thr-40 are mitochondrial intermembrane. The helical transmembrane segment at Thr-41 to Thr-66 threads the bilayer. The Mitochondrial matrix portion of the chain corresponds to Tyr-67–Thr-72. Residues Leu-73–Ser-105 form a helical membrane-spanning segment. Residues Leu-106–Glu-128 lie on the Mitochondrial intermembrane side of the membrane. Residues Val-129 to Met-152 form a helical membrane-spanning segment. Topologically, residues Glu-153 to Asn-155 are mitochondrial matrix. Residues Arg-156–Glu-183 form a helical membrane-spanning segment. Topologically, residues Ala-184–Asp-190 are mitochondrial intermembrane. A helical transmembrane segment spans residues Gly-191 to Leu-223. Residues Leu-224–His-232 are Mitochondrial matrix-facing. A helical transmembrane segment spans residues Phe-233–Ile-256. Residues Tyr-257 to Ser-261 are Mitochondrial intermembrane-facing.

This sequence belongs to the cytochrome c oxidase subunit 3 family. As to quaternary structure, component of the cytochrome c oxidase (complex IV, CIV), a multisubunit enzyme composed of 14 subunits. The complex is composed of a catalytic core of 3 subunits MT-CO1, MT-CO2 and MT-CO3, encoded in the mitochondrial DNA, and 11 supernumerary subunits COX4I, COX5A, COX5B, COX6A, COX6B, COX6C, COX7A, COX7B, COX7C, COX8 and NDUFA4, which are encoded in the nuclear genome. The complex exists as a monomer or a dimer and forms supercomplexes (SCs) in the inner mitochondrial membrane with NADH-ubiquinone oxidoreductase (complex I, CI) and ubiquinol-cytochrome c oxidoreductase (cytochrome b-c1 complex, complex III, CIII), resulting in different assemblies (supercomplex SCI(1)III(2)IV(1) and megacomplex MCI(2)III(2)IV(2)).

The protein resides in the mitochondrion inner membrane. The catalysed reaction is 4 Fe(II)-[cytochrome c] + O2 + 8 H(+)(in) = 4 Fe(III)-[cytochrome c] + 2 H2O + 4 H(+)(out). Component of the cytochrome c oxidase, the last enzyme in the mitochondrial electron transport chain which drives oxidative phosphorylation. The respiratory chain contains 3 multisubunit complexes succinate dehydrogenase (complex II, CII), ubiquinol-cytochrome c oxidoreductase (cytochrome b-c1 complex, complex III, CIII) and cytochrome c oxidase (complex IV, CIV), that cooperate to transfer electrons derived from NADH and succinate to molecular oxygen, creating an electrochemical gradient over the inner membrane that drives transmembrane transport and the ATP synthase. Cytochrome c oxidase is the component of the respiratory chain that catalyzes the reduction of oxygen to water. Electrons originating from reduced cytochrome c in the intermembrane space (IMS) are transferred via the dinuclear copper A center (CU(A)) of subunit 2 and heme A of subunit 1 to the active site in subunit 1, a binuclear center (BNC) formed by heme A3 and copper B (CU(B)). The BNC reduces molecular oxygen to 2 water molecules using 4 electrons from cytochrome c in the IMS and 4 protons from the mitochondrial matrix. The protein is Cytochrome c oxidase subunit 3 (MT-CO3) of Pongo abelii (Sumatran orangutan).